The primary structure comprises 197 residues: Thymidine kinase (197 aa).

ATP-binding positions include 15 to 22 and 93 to 96; these read GPMFAGKT and DEVQ. Glutamate 94 (proton acceptor) is an active-site residue. Zn(2+) is bound by residues cysteine 150, cysteine 153, cysteine 188, and histidine 191.

It belongs to the thymidine kinase family. As to quaternary structure, homotetramer.

The protein localises to the cytoplasm. The enzyme catalyses thymidine + ATP = dTMP + ADP + H(+). In Thermococcus kodakarensis (strain ATCC BAA-918 / JCM 12380 / KOD1) (Pyrococcus kodakaraensis (strain KOD1)), this protein is Thymidine kinase.